A 513-amino-acid polypeptide reads, in one-letter code: Beta-glucosidase 5 (513 aa).

A signal peptide spans 1-26; the sequence is MAAAIAVVYLSLLLLLLHGAAPAVLG. Q46 provides a ligand contact to a beta-D-glucoside. E192 acts as the Proton donor in catalysis. A disulfide bridge links C211 with C220. 2 N-linked (GlcNAc...) asparagine glycosylation sites follow: N224 and N273. Residues Y336 and E405 each contribute to the a beta-D-glucoside site. E405 serves as the catalytic Nucleophile. An N-linked (GlcNAc...) asparagine glycan is attached at N412. Residues W447, 454-455, and Y463 each bind a beta-D-glucoside; that span reads EY.

Belongs to the glycosyl hydrolase 1 family.

It carries out the reaction Hydrolysis of terminal, non-reducing beta-D-glucosyl residues with release of beta-D-glucose.. The chain is Beta-glucosidase 5 (BGLU5) from Oryza sativa subsp. japonica (Rice).